The chain runs to 154 residues: MKAVLQRVAEARVVVAGETVGQIGQGLLVLVCAERGDAEGQADKLLAKILKLRIFSDEAGKMNRSVQDLDGAGKQGGLLIVSQFTLAADVSGGNRPSFTDAAAPDEGRRLYDYFVAQALALHPMVQTGQFAADMQVHLVNDGPVTIPLHIDPAA.

The Gly-cisPro motif, important for rejection of L-amino acids signature appears at 142–143; sequence GP.

Belongs to the DTD family. In terms of assembly, homodimer.

It localises to the cytoplasm. The enzyme catalyses glycyl-tRNA(Ala) + H2O = tRNA(Ala) + glycine + H(+). It catalyses the reaction a D-aminoacyl-tRNA + H2O = a tRNA + a D-alpha-amino acid + H(+). An aminoacyl-tRNA editing enzyme that deacylates mischarged D-aminoacyl-tRNAs. Also deacylates mischarged glycyl-tRNA(Ala), protecting cells against glycine mischarging by AlaRS. Acts via tRNA-based rather than protein-based catalysis; rejects L-amino acids rather than detecting D-amino acids in the active site. By recycling D-aminoacyl-tRNA to D-amino acids and free tRNA molecules, this enzyme counteracts the toxicity associated with the formation of D-aminoacyl-tRNA entities in vivo and helps enforce protein L-homochirality. This Polaromonas sp. (strain JS666 / ATCC BAA-500) protein is D-aminoacyl-tRNA deacylase.